We begin with the raw amino-acid sequence, 809 residues long: Trimethylamine-N-oxide reductase 2 (809 aa).

Positions Met-1 to Ala-31 form a signal peptide, tat-type signal. A Mo-bis(molybdopterin guanine dinucleotide)-binding site is contributed by Ser-176.

It belongs to the prokaryotic molybdopterin-containing oxidoreductase family. Requires Mo-bis(molybdopterin guanine dinucleotide) as cofactor. In terms of processing, predicted to be exported by the Tat system. The position of the signal peptide cleavage has not been experimentally proven.

The protein localises to the periplasm. It carries out the reaction trimethylamine + 2 Fe(III)-[cytochrome c] + H2O = trimethylamine N-oxide + 2 Fe(II)-[cytochrome c] + 3 H(+). Functionally, reduces trimethylamine-N-oxide (TMAO) into trimethylamine; an anaerobic reaction coupled to energy-yielding reactions. Can also reduce other N- and S-oxide compounds such as 4-methylmorpholine-N-oxide and biotin sulfoxide (BSO), but with a lower catalytic efficiency. This Escherichia coli O6:H1 (strain CFT073 / ATCC 700928 / UPEC) protein is Trimethylamine-N-oxide reductase 2 (torZ).